A 352-amino-acid polypeptide reads, in one-letter code: MANPTLFVSYDQNGKKLSFANWISVLSPQDTPFVSMTGKESINQTIFSWQTDALASVDGNNAHVEGSRAEDGEMKPTVIKSNVTQILRKVVRVSDTANTTANYGRGRELMYQLEKKGKEIKRDLEKILLSGQARTDVLADQYLTNSATDPAVVGLNDTHAARKTGAFQFLCAHGGLAGGVVDKTKNGPADPDTGAVTVKVAQNASNPTTNIGFDEADIFDMTLQLYTAGSEADIIMINPAHAKIFAGLQENTQGSRKRIFENTKQFIYEVNSITDPLGQSYKIIVNRWMPTDAVYFFRSADWTQMVLRAPKRTELAKDGSYEKWMIEMEVGLRHRNPYASGVLFTAAGKVAA.

The protein localises to the virion. In terms of biological role, assembles to form a prolate capsid of about 145 nm x 44 nm. The polypeptide is Major capsid protein (Escherichia coli (Escherichia coli phage phi32)).